A 648-amino-acid chain; its full sequence is Replication restart protein PriA (648 aa).

The region spanning 131–297 (TILNESNKPT…EIGKYQLVTL (167 aa)) is the Helicase ATP-binding domain. An ATP-binding site is contributed by 144–151 (GVTGSGKT). The short motif at 240 to 243 (DEEH) is the DEAH box element. Residues Cys-358, Cys-361, Cys-367, Cys-370, Cys-385, Cys-388, Cys-398, and Cys-401 each coordinate Zn(2+). Residues 393–548 (KIFSSCPECL…SFFANELEIR (156 aa)) enclose the Helicase C-terminal domain.

This sequence belongs to the helicase family. PriA subfamily. As to quaternary structure, component of the replication restart primosome. Requires Zn(2+) as cofactor.

The enzyme catalyses Couples ATP hydrolysis with the unwinding of duplex DNA by translocating in the 3'-5' direction.. The catalysed reaction is ATP + H2O = ADP + phosphate + H(+). Functionally, initiates the restart of stalled replication forks, which reloads the replicative helicase on sites other than the origin of replication. Recognizes and binds to abandoned replication forks and remodels them to uncover a helicase loading site. Promotes assembly of the primosome at these replication forks. The sequence is that of Replication restart protein PriA from Rickettsia felis (strain ATCC VR-1525 / URRWXCal2) (Rickettsia azadi).